A 330-amino-acid polypeptide reads, in one-letter code: Diacylglycerol acyltransferase/mycolyltransferase Ag85B (330 aa).

The N-terminal stretch at 1-40 (MTDLSEKVRAWGRRLVVGAAAAATLPGLIGIAGGAATANA) is a signal peptide. Residue 82-83 (LR) coordinates substrate. The tract at residues 98 to 108 (FEWYYQSGLSV) is fibronectin-binding. A disulfide bridge connects residues C127 and C132. Residues S166 and D194 each contribute to the substrate site. S166 (nucleophile) is an active-site residue. Residue E270 is part of the active site. Substrate is bound by residues 272 to 275 (FVRS), K279, and 302 to 304 (HSW). H302 is a catalytic residue.

It belongs to the mycobacterial A85 antigen family.

Its subcellular location is the secreted. The catalysed reaction is 2 alpha,alpha'-trehalose 6-mycolate = alpha,alpha'-trehalose 6,6'-bismycolate + alpha,alpha-trehalose. It catalyses the reaction an acyl-CoA + a 1,2-diacyl-sn-glycerol = a triacyl-sn-glycerol + CoA. In terms of biological role, the antigen 85 proteins (FbpA, FbpB, FbpC) are responsible for the high affinity of mycobacteria for fibronectin, a large adhesive glycoprotein, which facilitates the attachment of M.tuberculosis to murine alveolar macrophages (AMs). They also help to maintain the integrity of the cell wall by catalyzing the transfer of mycolic acids to cell wall arabinogalactan and through the synthesis of alpha,alpha-trehalose dimycolate (TDM, cord factor). They catalyze the transfer of a mycoloyl residue from one molecule of alpha,alpha-trehalose monomycolate (TMM) to another TMM, leading to the formation of TDM. This Mycobacterium intracellulare (strain ATCC 13950 / DSM 43223 / JCM 6384 / NCTC 13025 / 3600) protein is Diacylglycerol acyltransferase/mycolyltransferase Ag85B (fbpB).